A 519-amino-acid chain; its full sequence is MVVDDLHRLASSQFKLPVAPILFTALAATIGAFLLSSLRSYILYHRKMSLFPAPNSDSAFRSFFSSKARDKFLSNAQELIRQGFSQNKFAIRLKTDFTDVLLLSPRYLPQLRTEDRLQGGPYTVQELLGYLPGFEPFRFADQMPKFIPDVILTRMNRYLSNVPASITEEVEVNLAENWTDEKDWHSVHLHGTMLGLVGQCSIRTFLGPEMCRKKRWVDLHTEYTVAVVTAVQALRKWPRALVSIVQWFHPKAKAARALLNEARAMIQPMHEQRKRDMAAGKPVPADTLTWFEEVAKGQAYDAAVVQLTMALAGLHSSTDLLCAVMLNLSEHPDVVEALRQELVQVLKREGWKQTTFSQLTLMDSVLKESQRLKPVGRAFFKRVAVDNIKLDHGVEIPKGAFVAVSNHGMWDPHNYTDPDKFDAYRFARMSDNKSSAFSTVSVEHTGFGFGKNSCPGRNYVALQLKIILAHLLLKYEWRLPDNYTPATFNNGFDLIADPFAQVLVRRRLEAPEVSLRQNT.

Residues 16–36 (LPVAPILFTALAATIGAFLLS) traverse the membrane as a helical segment. N177, N327, N414, and N432 each carry an N-linked (GlcNAc...) asparagine glycan. C454 serves as a coordination point for heme.

The protein belongs to the cytochrome P450 family. Requires heme as cofactor.

The protein resides in the membrane. Its pathway is mycotoxin biosynthesis. Functionally, cytochrome P450 monooxygenase; part of the 2 gene clusters that mediate the biosynthesis of fusicoccins, diterpene glucosides that display phytohormone-like activity and function as potent activators of plasma membrane H(+)-ATPases in plants by modifying 14-3-3 proteins and cause the plant disease constriction canker. The first step in the pathway is performed by the fusicoccadiene synthase PaFS that possesses both prenyl transferase and terpene cyclase activity, converting isopentenyl diphosphate and dimethylallyl diphosphate into geranylgeranyl diphosphate (GGDP) and successively converting GGDP into fusicocca-2,10(14)-diene, a precursor for fusicoccin H. The second step is the oxidation at the C-8 position by the cytochrome P450 monooxygenase PaP450-2 to yield fusicocca-2,10(14)-diene-8-beta-ol. The cytochrome P450 monooxygenase PaP450-1 then catalyzes the hydroxylation at the C-16 position to produce fusicocca-2,10(14)-diene-8-beta,16-diol. The dioxygenase fc-dox then catalyzes the 16-oxydation of fusicocca-2,10(14)-diene-8-beta,16-diol to yield an aldehyde (8-beta-hydroxyfusicocca-1,10(14)-dien-16-al). The short-chain dehydrogenase/reductase fc-sdr catalyzes the reduction of the aldehyde to yield fusicocca-1,10(14)-diene-8-beta,16-diol. The next step is the hydroxylation at C-9 performed by the cytochrome P450 monooxygenase PaP450-3 that leads to fusicoccin H aglycon which is glycosylated to fusicoccin H by the O-glycosyltransferase PaGT. Hydroxylation at C-12 by the cytochrome P450 monooxygenase PaP450-4 leads then to the production of fusicoccin Q and is followed by methylation by the O-methyltransferase PaMT to yield fusicoccin P. Fusicoccin P is further converted to fusicoccin J via prenylation by the O-glucose prenyltransferase PaPT. Cytochrome P450 monooxygenase PaP450-5 then performs hydroxylation at C-19 to yield dideacetyl-fusicoccin A which is acetylated to 3'-O-deacetyl-fusicoccin A by the O-acetyltransferase PaAT-2. Finally, a another acetylation by the O-acetyltransferase PaAT-1 yields fusicoccin A. This chain is Dideacetyl fusicoccin A C-19 hydroxylase, found in Phomopsis amygdali (Fusicoccum amygdali).